Consider the following 213-residue polypeptide: Transcription antitermination protein NusB (213 aa).

Belongs to the NusB family.

Functionally, involved in transcription antitermination. Required for transcription of ribosomal RNA (rRNA) genes. Binds specifically to the boxA antiterminator sequence of the ribosomal RNA (rrn) operons. The sequence is that of Transcription antitermination protein NusB from Nostoc punctiforme (strain ATCC 29133 / PCC 73102).